We begin with the raw amino-acid sequence, 419 residues long: Phosphatidylcholine:ceramide cholinephosphotransferase 1 (419 aa).

The SAM domain maps to 13-76 (WSPKKVADWL…LDMIETLKME (64 aa)). Serine 14 carries the post-translational modification Phosphoserine. 5 helical membrane-spanning segments follow: residues 142-162 (LLAF…ISVV), 190-210 (FSIC…QWLL), 221-241 (FFCI…VTTL), 282-302 (MCGD…YLFI), and 310-330 (LWWY…CILL). The active site involves histidine 291. Residues 331-419 (AHDHYTVDVV…VKYSRLVNDT (89 aa)) are Cytoplasmic-facing. Residues histidine 334 and aspartate 338 contribute to the active site.

The protein belongs to the sphingomyelin synthase family.

The protein localises to the golgi apparatus membrane. It carries out the reaction an N-acylsphing-4-enine + a 1,2-diacyl-sn-glycero-3-phosphocholine = a sphingomyelin + a 1,2-diacyl-sn-glycerol. The enzyme catalyses 1-(9Z-octadecenoyl)-2-acyl-sn-3-glycerol + a sphingomyelin = a 1-(9Z-octadecenoyl)-2-acyl-sn-glycero-3-phosphocholine + an N-acylsphing-4-enine. The catalysed reaction is N-hexadecanoylsphinganine + a 1,2-diacyl-sn-glycero-3-phosphocholine = N-hexadecanoyl-sphinganine-1-phosphocholine + a 1,2-diacyl-sn-glycerol. It catalyses the reaction N-hexadecanoyl-(4R)-hydroxysphinganine + a 1,2-diacyl-sn-glycero-3-phosphocholine = N-hexadecanoyl-(4R)-hydroxysphinganine-phosphocholine + a 1,2-diacyl-sn-glycerol. It carries out the reaction an N-acylsphing-4-enine + a 1,2-diacyl-sn-glycero-3-phosphoethanolamine = an N-acylsphing-4-enine 1-phosphoethanolamine + a 1,2-diacyl-sn-glycerol. It participates in sphingolipid metabolism. In terms of biological role, major sphingomyelin synthase at the Golgi apparatus. Catalyzes the reversible transfer of phosphocholine moiety in sphingomyelin biosynthesis: in the forward reaction transfers phosphocholine head group of phosphatidylcholine (PC) on to ceramide (CER) to form ceramide phosphocholine (sphingomyelin, SM) and diacylglycerol (DAG) as by-product, and in the reverse reaction transfers phosphocholine from SM to DAG to form PC and CER. The direction of the reaction depends on the levels of CER and DAG in Golgi membranes. Converts the newly synthesized CER, that is transported from the endoplasmic reticulum to the trans-Golgi by the Cer transport protein (CERT), to SM. Can form a heteromeric complex with glucosylceramide synthase (GCS) increasing SMS activity and reducing glucosylceramide synthesis, a critical mechanism that controls the metabolic fate of CER in the Golgi. Does not use free phosphorylcholine or CDP-choline as donor. Can also transfer phosphoethanolamine head group of phosphatidylethanolamine (PE) on to CER to form ceramide phosphoethanolamine (CPE). Regulates receptor-mediated signal transduction via mitogenic DAG and proapoptotic CER, as well as via SM, a structural component of membrane rafts that serve as platforms for signal transduction and protein sorting. Plays a role in secretory transport via regulation of DAG pool at the Golgi apparatus and its downstream effects on PRKD1. In Rattus norvegicus (Rat), this protein is Phosphatidylcholine:ceramide cholinephosphotransferase 1 (Sgms1).